The following is a 346-amino-acid chain: Bifunctional phosphatase IMPL2, chloroplastic (346 aa).

The N-terminal 61 residues, 1–61, are a transit peptide targeting the chloroplast; that stretch reads MLAQSHFFSK…VSRRRFCLTM (61 aa). Mg(2+) is bound by residues Glu147, Asp165, and Asp168. Glu147 is a substrate binding site. Substrate is bound by residues 167–170, 263–265, Glu282, and Asp289; these read IDGT and GCD. Asp289 contributes to the Mg(2+) binding site.

The protein belongs to the inositol monophosphatase superfamily. It depends on Mg(2+) as a cofactor. Ubiquitous. High expression in roots. Expressed in pistil and seed endosperm.

The protein resides in the plastid. Its subcellular location is the chloroplast. It carries out the reaction a myo-inositol phosphate + H2O = myo-inositol + phosphate. The catalysed reaction is L-histidinol phosphate + H2O = L-histidinol + phosphate. The enzyme catalyses beta-L-galactose 1-phosphate + H2O = L-galactose + phosphate. It functions in the pathway amino-acid biosynthesis; L-histidine biosynthesis; L-histidine from 5-phospho-alpha-D-ribose 1-diphosphate: step 8/9. Its pathway is polyol metabolism; myo-inositol biosynthesis; myo-inositol from D-glucose 6-phosphate: step 2/2. Its function is as follows. Phosphatase required for histidine production. Also acts on L-galactose 1-phosphate (L-Gal 1-P), D-myoinositol 3-phosphate (D-Ins 3-P) and D-myoinositol 1-phosphate (D-Ins 1-P). This chain is Bifunctional phosphatase IMPL2, chloroplastic (HISN7), found in Arabidopsis thaliana (Mouse-ear cress).